A 329-amino-acid chain; its full sequence is Dolichyl-diphosphooligosaccharide--protein glycosyltransferase subunit MAGT1 (329 aa).

A signal peptide spans 1-23 (MAGLKGLLFGGILFAMCGGLSEG). Residues 24–178 (QKKKEMVLSD…DVNIRVIRPP (155 aa)) are Extracellular-facing. One can recognise a Thioredoxin domain in the interval 41–169 (WASKRPVIRM…LARWVADRTD (129 aa)). A glycan (N-linked (GlcNAc...) asparagine) is linked at Asn65. The cysteines at positions 81 and 84 are disulfide-linked. A helical membrane pass occupies residues 179 to 199 (NYAGPLMLGLLLAVIGGLVYL). At 200 to 212 (RRSNLDFLNNKTG) the chain is on the cytoplasmic side. Residues 213–233 (WALAALCFVLAMTSGQMWNHI) traverse the membrane as a helical segment. Residues 234–258 (RGPPYAHKNPHTNQVNYIHGSSQAQ) are Extracellular-facing. The helical transmembrane segment at 259-279 (FVAETHIVLLFNGAVTLGMVL) threads the bilayer. At 280–294 (LHEAATSDLDVGKRK) the chain is on the cytoplasmic side. A helical transmembrane segment spans residues 295 to 315 (IMCIAGITLVVIFFSWLLSVF). Residues 316-329 (RSKYHGYPYSFLMT) are Extracellular-facing.

This sequence belongs to the OST3/OST6 family. As to quaternary structure, accessory component of the STT3B-containing form of the oligosaccharyltransferase (OST) complex.

The protein localises to the cell membrane. It is found in the endoplasmic reticulum. It localises to the endoplasmic reticulum membrane. It participates in protein modification; protein glycosylation. In terms of biological role, accessory component of the STT3B-containing form of the N-oligosaccharyl transferase (OST) complex which catalyzes the transfer of a high mannose oligosaccharide from a lipid-linked oligosaccharide donor to an asparagine residue within an Asn-X-Ser/Thr consensus motif in nascent polypeptide chains. May be involved in substrate-specific N-glycosylation involving acceptor sites that are near cysteine residues. Could indirectly play a role in Mg(2+) transport in epithelial cells. This Xenopus laevis (African clawed frog) protein is Dolichyl-diphosphooligosaccharide--protein glycosyltransferase subunit MAGT1.